Reading from the N-terminus, the 237-residue chain is Ribonuclease PH (237 aa).

Residues R86 and 124–126 (GTR) each bind phosphate.

The protein belongs to the RNase PH family. In terms of assembly, homohexameric ring arranged as a trimer of dimers.

The catalysed reaction is tRNA(n+1) + phosphate = tRNA(n) + a ribonucleoside 5'-diphosphate. Its function is as follows. Phosphorolytic 3'-5' exoribonuclease that plays an important role in tRNA 3'-end maturation. Removes nucleotide residues following the 3'-CCA terminus of tRNAs; can also add nucleotides to the ends of RNA molecules by using nucleoside diphosphates as substrates, but this may not be physiologically important. Probably plays a role in initiation of 16S rRNA degradation (leading to ribosome degradation) during starvation. This is Ribonuclease PH from Shewanella piezotolerans (strain WP3 / JCM 13877).